The following is a 56-amino-acid chain: Arcadin-3 (56 aa).

It is found in the cytoplasm. Its subcellular location is the cytoskeleton. Part of an actin-like archaeal cytoskeleton. The protein is Arcadin-3 of Pyrobaculum calidifontis (strain DSM 21063 / JCM 11548 / VA1).